The primary structure comprises 458 residues: A-type ATP synthase subunit B (458 aa).

The protein belongs to the ATPase alpha/beta chains family. In terms of assembly, has multiple subunits with at least A(3), B(3), C, D, E, F, H, I and proteolipid K(x).

It localises to the cell membrane. In terms of biological role, component of the A-type ATP synthase that produces ATP from ADP in the presence of a proton gradient across the membrane. The B chain is a regulatory subunit. This is A-type ATP synthase subunit B from Methanocella arvoryzae (strain DSM 22066 / NBRC 105507 / MRE50).